The following is a 24-amino-acid chain: Protein YahV (24 aa).

Residues 4 to 24 (ILLNVLNIVFIGIAIILVIIC) form a helical membrane-spanning segment.

Its subcellular location is the cell inner membrane. The sequence is that of Protein YahV from Escherichia coli (strain K12).